The chain runs to 229 residues: Juvenile hormone-binding protein (229 aa).

Residues 1–3 (VLS) form the signal peptide.

It is found in the secreted. Prevents juvenile hormone from being hydrolyzed by general esterases by combining with it specifically. This is Juvenile hormone-binding protein (JHBP) from Manduca sexta (Tobacco hawkmoth).